Here is a 669-residue protein sequence, read N- to C-terminus: MAAERSRSPMESPVPASMFAPEPSSPGAARAAAAAARLHGGFDSDCSEDGEALNGEPELDLTSKLVLVSPTSEQYDSLLRQMWERMDEGCGETIYVIGQGSDGTEYGLSEADMEASYATVKSMAEQIEADVILLRERQEAGGRVRDYLVRKRVGDNDFLEVRVAVVGNVDAGKSTLLGVLTHGELDNGRGFARQKLFRHKHEIESGRTSSVGNDILGFDSEGNVVNKPDSHGGSLEWTKICEKSTKVITFIDLAGHEKYLKTTVFGMTGHLPDFCMLMVGSNAGIVGMTKEHLGLALALNVPVFVVVTKIDMCPANILQETLKLLQRLLKSPGCRKIPVLVQSKDDVIVTASNFSSERMCPIFQISNVTGENLDLLKMFLNLLSPRTSYREEEPAEFQIDDTYSVPGVGTVVSGTTLRGLIKLNDTLLLGPDPLGNFLSIAVKSIHRKRMPVKEVRGGQTASFALKKIKRSSIRKGMVMVSPRLNPQASWEFEAEILVLHHPTTISPRYQAMVHCGSIRQTATILSMDKDCLRTGDKATVHFRFIKTPEYLHIDQRLVFREGRTKAVGTITKLLQTTNNSPMNSKPQQIKMQSTKKGPLPKREEGGPSGGPTVGGPPPGDEACSLGATQLAASSSLQPQPKPSSGGRRRGGQRHKVKSQGACMTPASGC.

The disordered stretch occupies residues 1 to 32 (MAAERSRSPMESPVPASMFAPEPSSPGAARAA). Phosphoserine is present on residues Ser6, Ser8, Ser12, Ser24, Ser25, Ser44, Ser47, and Ser69. One can recognise a tr-type G domain in the interval 158-389 (FLEVRVAVVG…LNLLSPRTSY (232 aa)). The interval 167-174 (GNVDAGKS) is G1. 167–174 (GNVDAGKS) contacts GTP. Residues 206 to 210 (GRTSS) are G2. The tract at residues 252 to 255 (DLAG) is G3. Residues 252–256 (DLAGH) and 308–311 (TKID) each bind GTP. A G4 region spans residues 308–311 (TKID). Positions 366–368 (SNV) are G5. Polar residues predominate over residues 573-595 (LLQTTNNSPMNSKPQQIKMQSTK). The disordered stretch occupies residues 573 to 669 (LLQTTNNSPM…GACMTPASGC (97 aa)). The residue at position 580 (Ser580) is a Phosphoserine. Residues 633-645 (SSSLQPQPKPSSG) show a composition bias toward low complexity. Residues 646–657 (GRRRGGQRHKVK) are compositionally biased toward basic residues.

The protein belongs to the TRAFAC class translation factor GTPase superfamily. Classic translation factor GTPase family. GTPBP1 subfamily. As to quaternary structure, interacts with EXOSC2/RRP4, EXOSC3/RRP40, EXOSC5/RRP46, HNRNPD, HNRNPR and SYNCRIP. Identified in a complex with AANAT mRNA, but does not bind mRNA by itself.

It localises to the cytoplasm. Functionally, promotes degradation of target mRNA species. Plays a role in the regulation of circadian mRNA stability. Binds GTP and has GTPase activity. This is GTP-binding protein 1 (GTPBP1) from Bos taurus (Bovine).